The following is a 1463-amino-acid chain: Probable ATP-dependent RNA helicase spindle-E (1463 aa).

Positions 131–296 (LKAIRENPVV…FKIPGPNSLF (166 aa)) constitute a Helicase ATP-binding domain. 144–151 (GMTGCGKT) lines the ATP pocket. The DEAH box signature appears at 243–246 (DEVH). One can recognise a Helicase C-terminal domain in the interval 348–531 (VCDRFIDEFE…NVVLKTKLLD (184 aa)). A Tudor domain is found at 951 to 1016 (AFKQRDIVAA…QLRGTPLDMF (66 aa)).

This sequence belongs to the DEAD box helicase family. DEAH subfamily.

It is found in the cytoplasm. It catalyses the reaction ATP + H2O = ADP + phosphate + H(+). Its function is as follows. Probable ATP-binding RNA helicase which plays a central role during gametogenesis by repressing transposable elements and preventing their mobilization, which is essential for the germline integrity. Acts via the piRNA metabolic process, which mediates the repression of transposable elements during meiosis by forming complexes composed of piRNAs and Piwi proteins and govern the methylation and subsequent repression of transposons. This is Probable ATP-dependent RNA helicase spindle-E (spn-E) from Anopheles gambiae (African malaria mosquito).